The chain runs to 81 residues: Large ribosomal subunit protein bL31B (81 aa).

Belongs to the bacterial ribosomal protein bL31 family. Type B subfamily. In terms of assembly, part of the 50S ribosomal subunit.

The protein is Large ribosomal subunit protein bL31B of Cutibacterium acnes (strain DSM 16379 / KPA171202) (Propionibacterium acnes).